We begin with the raw amino-acid sequence, 413 residues long: Short-chain specific acyl-CoA dehydrogenase, mitochondrial (413 aa).

The transit peptide at 1-24 directs the protein to the mitochondrion; sequence MAAALLARACGPVRGALWPRDCRR. Residue Thr27 is modified to Phosphothreonine. Lys51 bears the N6-acetyllysine; alternate mark. N6-succinyllysine; alternate is present on Lys51. An N6-acetyllysine modification is found at Lys72. At Lys129 the chain carries N6-acetyllysine; alternate. Lys129 is subject to N6-succinyllysine; alternate. FAD is bound by residues 152-161 and 185-187; these read FALSEPGNGS and WIT. Residue Ser161 participates in substrate binding. Lys208 is modified (N6-acetyllysine). The residue at position 262 (Lys262) is an N6-acetyllysine; alternate. Lys262 bears the N6-succinyllysine; alternate mark. Position 269 to 272 (269 to 272) interacts with substrate; that stretch reads DMGR. FAD is bound at residue Arg297. N6-acetyllysine; alternate is present on Lys306. N6-succinyllysine; alternate is present on Lys306. FAD contacts are provided by residues Gln308 and 366–370; that span reads QILGG. The active-site Proton acceptor is the Glu393. Gly394 is a binding site for substrate. An FAD-binding site is contributed by 395–397; that stretch reads TSE.

This sequence belongs to the acyl-CoA dehydrogenase family. In terms of assembly, homotetramer. FAD is required as a cofactor.

It localises to the mitochondrion matrix. It catalyses the reaction a short-chain 2,3-saturated fatty acyl-CoA + oxidized [electron-transfer flavoprotein] + H(+) = a short-chain (2E)-enoyl-CoA + reduced [electron-transfer flavoprotein]. The enzyme catalyses butanoyl-CoA + oxidized [electron-transfer flavoprotein] + H(+) = (2E)-butenoyl-CoA + reduced [electron-transfer flavoprotein]. It carries out the reaction pentanoyl-CoA + oxidized [electron-transfer flavoprotein] + H(+) = (2E)-pentenoyl-CoA + reduced [electron-transfer flavoprotein]. The catalysed reaction is hexanoyl-CoA + oxidized [electron-transfer flavoprotein] + H(+) = (2E)-hexenoyl-CoA + reduced [electron-transfer flavoprotein]. It participates in lipid metabolism; mitochondrial fatty acid beta-oxidation. Short-chain specific acyl-CoA dehydrogenase is one of the acyl-CoA dehydrogenases that catalyze the first step of mitochondrial fatty acid beta-oxidation, an aerobic process breaking down fatty acids into acetyl-CoA and allowing the production of energy from fats. The first step of fatty acid beta-oxidation consists in the removal of one hydrogen from C-2 and C-3 of the straight-chain fatty acyl-CoA thioester, resulting in the formation of trans-2-enoyl-CoA. Among the different mitochondrial acyl-CoA dehydrogenases, short-chain specific acyl-CoA dehydrogenase acts specifically on acyl-CoAs with saturated 4 to 6 carbons long primary chains. This is Short-chain specific acyl-CoA dehydrogenase, mitochondrial (ACADS) from Sus scrofa (Pig).